A 364-amino-acid polypeptide reads, in one-letter code: Carbamoyl phosphate synthase pyrimidine-specific small chain (364 aa).

The segment at 1–169 (MKRYLVLEDG…AYPNPATGPN (169 aa)) is CPSase. 3 residues coordinate L-glutamine: Ser45, Gly217, and Gly219. The 188-residue stretch at 169–356 (NVVVVDFGLK…IDLMAANQAT (188 aa)) folds into the Glutamine amidotransferase type-1 domain. Cys244 (nucleophile) is an active-site residue. Residues Leu245, Gln248, Asn286, Gly288, and Tyr289 each coordinate L-glutamine. Residues His329 and Asp331 contribute to the active site.

This sequence belongs to the CarA family. Composed of two chains; the small (or glutamine) chain promotes the hydrolysis of glutamine to ammonia, which is used by the large (or ammonia) chain to synthesize carbamoyl phosphate. Tetramer of heterodimers (alpha,beta)4.

The enzyme catalyses hydrogencarbonate + L-glutamine + 2 ATP + H2O = carbamoyl phosphate + L-glutamate + 2 ADP + phosphate + 2 H(+). The catalysed reaction is L-glutamine + H2O = L-glutamate + NH4(+). The protein operates within pyrimidine metabolism; UMP biosynthesis via de novo pathway; (S)-dihydroorotate from bicarbonate: step 1/3. Its activity is regulated as follows. Inhibited by pyrimidine. Small subunit of the glutamine-dependent carbamoyl phosphate synthetase (CPSase). CPSase catalyzes the formation of carbamoyl phosphate from the ammonia moiety of glutamine, carbonate, and phosphate donated by ATP, constituting the first step of the biosynthetic pathway leading to pyrimidine nucleotides. The small subunit (glutamine amidotransferase) binds and cleaves glutamine to supply the large subunit with the substrate ammonia. This is Carbamoyl phosphate synthase pyrimidine-specific small chain from Lactiplantibacillus plantarum (strain ATCC BAA-793 / NCIMB 8826 / WCFS1) (Lactobacillus plantarum).